Consider the following 561-residue polypeptide: Potassium-transporting ATPase potassium-binding subunit (561 aa).

The next 12 helical transmembrane spans lie at 2–22, 66–86, 135–155, 177–197, 253–273, 280–300, 327–347, 354–374, 378–398, 413–433, 482–502, and 531–551; these read GQGL…TPVL, IRAI…LIYF, ALGF…IAFI, ILLP…VPQT, LIET…YGVF, AWLL…VAAG, FGWA…CGAV, LMPQ…IWGG, GTAY…LMVG, IVLA…PSAI, LSTS…MLLL, and AGIV…LGPI.

The protein belongs to the KdpA family. As to quaternary structure, the system is composed of three essential subunits: KdpA, KdpB and KdpC.

The protein localises to the cell inner membrane. In terms of biological role, part of the high-affinity ATP-driven potassium transport (or Kdp) system, which catalyzes the hydrolysis of ATP coupled with the electrogenic transport of potassium into the cytoplasm. This subunit binds the periplasmic potassium ions and delivers the ions to the membrane domain of KdpB through an intramembrane tunnel. This Nostoc sp. (strain PCC 7120 / SAG 25.82 / UTEX 2576) protein is Potassium-transporting ATPase potassium-binding subunit.